The primary structure comprises 197 residues: MNRSRRLALFCLGAPLLLQACASVAPSRSFDGDQAAASQQYTGRFSANYVRYGRDEGVQGSFRWEEQGRNVRLDLVSPLGQTLAVVTATPSGATLDLPNQPPRNAPEVDTLMEEALGFALPVAGMRDWLHGRATQGAPARTTRDEQGRLATLAQNGWTVRYVAWQDAAAQVPRRIDLARDAGSNPLSVRLVIDPRTP.

A signal peptide spans Met-1–Ala-20. Cys-21 is lipidated: N-palmitoyl cysteine. A lipid anchor (S-diacylglycerol cysteine) is attached at Cys-21.

The protein belongs to the LolB family. In terms of assembly, monomer.

The protein localises to the cell outer membrane. Plays a critical role in the incorporation of lipoproteins in the outer membrane after they are released by the LolA protein. The chain is Outer-membrane lipoprotein LolB from Cupriavidus necator (strain ATCC 17699 / DSM 428 / KCTC 22496 / NCIMB 10442 / H16 / Stanier 337) (Ralstonia eutropha).